Reading from the N-terminus, the 283-residue chain is Pantothenate synthetase (283 aa).

An ATP-binding site is contributed by 30 to 37 (MGALHEGH). His-37 acts as the Proton donor in catalysis. A (R)-pantoate-binding site is contributed by Gln-61. Gln-61 is a beta-alanine binding site. Residue 147–150 (GEKD) coordinates ATP. Gln-153 is a binding site for (R)-pantoate. ATP contacts are provided by residues Ile-176 and 184-187 (VSSR).

This sequence belongs to the pantothenate synthetase family. Homodimer.

It is found in the cytoplasm. It catalyses the reaction (R)-pantoate + beta-alanine + ATP = (R)-pantothenate + AMP + diphosphate + H(+). It functions in the pathway cofactor biosynthesis; (R)-pantothenate biosynthesis; (R)-pantothenate from (R)-pantoate and beta-alanine: step 1/1. In terms of biological role, catalyzes the condensation of pantoate with beta-alanine in an ATP-dependent reaction via a pantoyl-adenylate intermediate. The protein is Pantothenate synthetase of Chlorobium phaeobacteroides (strain DSM 266 / SMG 266 / 2430).